The following is a 90-amino-acid chain: DNA-directed RNA polymerase subunit Rpo11 (90 aa).

Belongs to the archaeal Rpo11/eukaryotic RPB11/RPC19 RNA polymerase subunit family. Part of the 13-subunit RNA polymerase complex.

Its subcellular location is the cytoplasm. The catalysed reaction is RNA(n) + a ribonucleoside 5'-triphosphate = RNA(n+1) + diphosphate. Its function is as follows. DNA-dependent RNA polymerase (RNAP) catalyzes the transcription of DNA into RNA using the four ribonucleoside triphosphates as substrates. The chain is DNA-directed RNA polymerase subunit Rpo11 from Sulfolobus acidocaldarius (strain ATCC 33909 / DSM 639 / JCM 8929 / NBRC 15157 / NCIMB 11770).